Reading from the N-terminus, the 98-residue chain is NADH-ubiquinone oxidoreductase chain 4L (98 aa).

Transmembrane regions (helical) follow at residues 1–21 (MSPM…GLAF), 26–46 (LLSA…ATAT), and 58–78 (ILPM…LAIL).

Belongs to the complex I subunit 4L family.

It is found in the mitochondrion membrane. The enzyme catalyses a ubiquinone + NADH + 5 H(+)(in) = a ubiquinol + NAD(+) + 4 H(+)(out). Functionally, core subunit of the mitochondrial membrane respiratory chain NADH dehydrogenase (Complex I) which catalyzes electron transfer from NADH through the respiratory chain, using ubiquinone as an electron acceptor. Part of the enzyme membrane arm which is embedded in the lipid bilayer and involved in proton translocation. This is NADH-ubiquinone oxidoreductase chain 4L (MT-ND4L) from Scyliorhinus canicula (Small-spotted catshark).